The primary structure comprises 188 residues: Deoxyuridine 5'-triphosphate nucleotidohydrolase (188 aa).

Residues 1–34 (MGEMTSGVDGHGSTKRTTSEAQKMDFNTDRGSAI) are disordered.

It belongs to the dUTPase family. Mg(2+) serves as cofactor.

It carries out the reaction dUTP + H2O = dUMP + diphosphate + H(+). Functionally, this enzyme is involved in nucleotide metabolism: it produces dUMP, the immediate precursor of thymidine nucleotides and it decreases the intracellular concentration of dUTP so that uracil cannot be incorporated into DNA. The protein is Deoxyuridine 5'-triphosphate nucleotidohydrolase (49) of Ictaluridae (bullhead catfishes).